The primary structure comprises 232 residues: Ornithine carbamoyltransferase (232 aa).

Residues glutamine 15, arginine 39, and 66 to 69 (HPTQ) each bind carbamoyl phosphate. Residues asparagine 99, aspartate 163, and 167-168 (SM) each bind L-ornithine. Carbamoyl phosphate is bound by residues 204–207 (HCLP) and threonine 232.

Belongs to the aspartate/ornithine carbamoyltransferase superfamily. OTCase family.

It localises to the cytoplasm. The enzyme catalyses carbamoyl phosphate + L-ornithine = L-citrulline + phosphate + H(+). Its pathway is amino-acid biosynthesis; L-arginine biosynthesis; L-arginine from L-ornithine and carbamoyl phosphate: step 1/3. Its function is as follows. Reversibly catalyzes the transfer of the carbamoyl group from carbamoyl phosphate (CP) to the N(epsilon) atom of ornithine (ORN) to produce L-citrulline. This chain is Ornithine carbamoyltransferase (argF), found in Neisseria sicca.